A 71-amino-acid chain; its full sequence is uncharacterized protein (71 aa).

A Sm domain is found at 15-71 (PNFEYARRLNGKKVKIFLRNGEVLDAEVTGVSNYEIMVKVGDRNLLVFKHAIDYIEY).

This is an uncharacterized protein from Methanocaldococcus jannaschii (strain ATCC 43067 / DSM 2661 / JAL-1 / JCM 10045 / NBRC 100440) (Methanococcus jannaschii).